The primary structure comprises 604 residues: Threonine--tRNA ligase (604 aa).

Positions 197 to 499 (DHRKLGRELG…LIEEYAGDFP (303 aa)) are catalytic. Zn(2+) is bound by residues Cys-296, His-347, and His-476.

Belongs to the class-II aminoacyl-tRNA synthetase family. In terms of assembly, homodimer. The cofactor is Zn(2+).

The protein resides in the cytoplasm. It carries out the reaction tRNA(Thr) + L-threonine + ATP = L-threonyl-tRNA(Thr) + AMP + diphosphate + H(+). Its function is as follows. Catalyzes the attachment of threonine to tRNA(Thr) in a two-step reaction: L-threonine is first activated by ATP to form Thr-AMP and then transferred to the acceptor end of tRNA(Thr). Also edits incorrectly charged L-seryl-tRNA(Thr). This chain is Threonine--tRNA ligase, found in Synechococcus elongatus (strain ATCC 33912 / PCC 7942 / FACHB-805) (Anacystis nidulans R2).